The sequence spans 490 residues: Zinc finger protein STP4 (490 aa).

Composition is skewed to low complexity over residues 1 to 16 (MLVS…SVMS) and 52 to 73 (PSLP…STLN). The tract at residues 1–85 (MLVSSSFASS…PPPPLTTSYS (85 aa)) is disordered. Serine 153 and serine 155 each carry phosphoserine. Residues 231–247 (QQQQQLNSSSSASALPS) are compositionally biased toward low complexity. The interval 231 to 273 (QQQQQLNSSSSASALPSIHSPLTNEHTSRYSSSLKDSAKITKQ) is disordered. Positions 250–265 (SPLTNEHTSRYSSSLK) are enriched in polar residues. Residues 304-326 (HKCPICQRGFARNNDLIRHKKRH) form a C2H2-type zinc finger. The interval 338–375 (ESDNNSGADDQDDTARTSANNDSDDSNDKLAASSSSEE) is disordered.

The protein resides in the cytoplasm. It localises to the mitochondrion. The protein localises to the nucleus. The polypeptide is Zinc finger protein STP4 (STP4) (Saccharomyces cerevisiae (strain ATCC 204508 / S288c) (Baker's yeast)).